We begin with the raw amino-acid sequence, 524 residues long: Glutamyl-tRNA(Gln) amidotransferase subunit A, mitochondrial (524 aa).

The active-site Charge relay system is lysine 76. The tract at residues 146-168 is disordered; sequence KQYRGKGSPDSSQEDQEPQWLVA. Residue serine 171 is the Charge relay system of the active site. Catalysis depends on serine 195, which acts as the Acyl-ester intermediate.

It belongs to the amidase family. GatA subfamily. Subunit of the heterotrimeric GatCAB amidotransferase (AdT) complex, composed of A (QRSL1), B (GATB) and C (GATC) subunits.

It is found in the mitochondrion. The enzyme catalyses L-glutamyl-tRNA(Gln) + L-glutamine + ATP + H2O = L-glutaminyl-tRNA(Gln) + L-glutamate + ADP + phosphate + H(+). Allows the formation of correctly charged Gln-tRNA(Gln) through the transamidation of misacylated Glu-tRNA(Gln) in the mitochondria. The reaction takes place in the presence of glutamine and ATP through an activated gamma-phospho-Glu-tRNA(Gln). The chain is Glutamyl-tRNA(Gln) amidotransferase subunit A, mitochondrial from Ornithorhynchus anatinus (Duckbill platypus).